The primary structure comprises 148 residues: 1,4-dihydroxy-2-naphthoyl-CoA hydrolase (148 aa).

Residue D15 is part of the active site.

This sequence belongs to the 4-hydroxybenzoyl-CoA thioesterase family. DHNA-CoA hydrolase subfamily.

It carries out the reaction 1,4-dihydroxy-2-naphthoyl-CoA + H2O = 1,4-dihydroxy-2-naphthoate + CoA + H(+). The protein operates within cofactor biosynthesis; phylloquinone biosynthesis. Its pathway is quinol/quinone metabolism; 1,4-dihydroxy-2-naphthoate biosynthesis; 1,4-dihydroxy-2-naphthoate from chorismate: step 7/7. Functionally, catalyzes the hydrolysis of 1,4-dihydroxy-2-naphthoyl-CoA (DHNA-CoA) to 1,4-dihydroxy-2-naphthoate (DHNA), a reaction involved in phylloquinone (vitamin K1) biosynthesis. The sequence is that of 1,4-dihydroxy-2-naphthoyl-CoA hydrolase from Nostoc sp. (strain PCC 7120 / SAG 25.82 / UTEX 2576).